Reading from the N-terminus, the 436-residue chain is N-lysine methyltransferase SMYD2 (436 aa).

Positions 10-244 constitute an SET domain; that stretch reads GGLERFASPG…PGEEVFTSYI (235 aa). Residue 20-22 participates in S-adenosyl-L-methionine binding; the sequence is KGR. Zn(2+) contacts are provided by Cys-55, Cys-58, Cys-68, Cys-71, Cys-77, Cys-81, His-89, and Cys-93. The segment at 55 to 93 adopts an MYND-type zinc-finger fold; it reads CDGCFARKEGLSKCGRCKQAFYCNVECQKEDWPMHKLEC. S-adenosyl-L-methionine-binding positions include His-140, 209-210, and 261-263; these read NH and YFF.

This sequence belongs to the class V-like SAM-binding methyltransferase superfamily.

The protein localises to the cytoplasm. It is found in the cytosol. It localises to the nucleus. The catalysed reaction is L-lysyl(4)-[histone H3] + 3 S-adenosyl-L-methionine = N(6),N(6),N(6)-trimethyl-L-lysyl(4)-[histone H3] + 3 S-adenosyl-L-homocysteine + 3 H(+). The enzyme catalyses L-lysyl-[protein] + S-adenosyl-L-methionine = N(6)-methyl-L-lysyl-[protein] + S-adenosyl-L-homocysteine + H(+). Its function is as follows. Protein-lysine N-methyltransferase that methylates both histones and non-histone proteins, including p53/TP53 and RB1. Specifically trimethylates histone H3 'Lys-4' (H3K4me3) in vivo. The activity requires interaction with HSP90alpha. Shows even higher methyltransferase activity on p53/TP53. Monomethylates 'Lys-370' of p53/TP53, leading to decreased DNA-binding activity and subsequent transcriptional regulation activity of p53/TP53. Monomethylates RB1 at 'Lys-860'. This chain is N-lysine methyltransferase SMYD2 (SMYD2), found in Gallus gallus (Chicken).